Here is a 65-residue protein sequence, read N- to C-terminus: Large ribosomal subunit protein bL35 (65 aa).

Positions 1–26 (MPKIKTVRGAAKRFKKTASGGFKRKQ) are disordered. Positions 10–26 (AAKRFKKTASGGFKRKQ) are enriched in basic residues.

It belongs to the bacterial ribosomal protein bL35 family.

The chain is Large ribosomal subunit protein bL35 from Actinobacillus succinogenes (strain ATCC 55618 / DSM 22257 / CCUG 43843 / 130Z).